The sequence spans 658 residues: Glycogen debranching enzyme (658 aa).

The active-site Nucleophile is Asp335. Catalysis depends on Glu370, which acts as the Proton donor.

It belongs to the glycosyl hydrolase 13 family.

The catalysed reaction is Hydrolysis of (1-&gt;6)-alpha-D-glucosidic linkages to branches with degrees of polymerization of three or four glucose residues in limit dextrin.. It participates in glycan degradation; glycogen degradation. In terms of biological role, removes maltotriose and maltotetraose chains that are attached by 1,6-alpha-linkage to the limit dextrin main chain, generating a debranched limit dextrin. The protein is Glycogen debranching enzyme of Erwinia tasmaniensis (strain DSM 17950 / CFBP 7177 / CIP 109463 / NCPPB 4357 / Et1/99).